The following is a 312-amino-acid chain: Aspartate carbamoyltransferase catalytic subunit (312 aa).

Residues Arg-55 and Thr-56 each coordinate carbamoyl phosphate. Residue Lys-83 coordinates L-aspartate. The carbamoyl phosphate site is built by Arg-105, His-138, and Gln-141. L-aspartate is bound by residues Arg-171 and Arg-225. 2 residues coordinate carbamoyl phosphate: Gly-266 and Pro-267.

This sequence belongs to the aspartate/ornithine carbamoyltransferase superfamily. ATCase family. As to quaternary structure, heterododecamer (2C3:3R2) of six catalytic PyrB chains organized as two trimers (C3), and six regulatory PyrI chains organized as three dimers (R2).

It carries out the reaction carbamoyl phosphate + L-aspartate = N-carbamoyl-L-aspartate + phosphate + H(+). It functions in the pathway pyrimidine metabolism; UMP biosynthesis via de novo pathway; (S)-dihydroorotate from bicarbonate: step 2/3. Catalyzes the condensation of carbamoyl phosphate and aspartate to form carbamoyl aspartate and inorganic phosphate, the committed step in the de novo pyrimidine nucleotide biosynthesis pathway. In Corynebacterium glutamicum (strain ATCC 13032 / DSM 20300 / JCM 1318 / BCRC 11384 / CCUG 27702 / LMG 3730 / NBRC 12168 / NCIMB 10025 / NRRL B-2784 / 534), this protein is Aspartate carbamoyltransferase catalytic subunit.